The sequence spans 65 residues: Large ribosomal subunit protein bL35 (65 aa).

Residues 1 to 26 (MPKMKTNRASAKRFKKTASGGFKAGQ) are disordered.

It belongs to the bacterial ribosomal protein bL35 family.

This is Large ribosomal subunit protein bL35 from Oenococcus oeni (strain ATCC BAA-331 / PSU-1).